A 359-amino-acid chain; its full sequence is MTIFSGPRGLFACYCLVAESSESPKRCYIGFTNNPLRRIRQHNRKIAGGARKTSRYGPWRMVLFVGGFSTKVSALKFEYIWTYPTRSRYVNCISATSQKLRLACPRSISTALDVLVTLLIHPPFSLQPLYVVLLDAEGNRVKSQLEQHSVPVFVSTMEALQIEPGVRAPSDIIYAQCTSSNGTTDTTFTDVCPICQDGVSPSNVQCMQCSARFCITCAGKLFTRRNTLIPCFGKCPICKREFQWKEMLRKRAEELVAGRKSVPHKTQAVDGQSSLSQNSSYDDYDTISLLSSSSEPEKDDISRDESGTVASVQPVSSVALSDSSRSPATTSPTKPLAIDPLLSSPRPCALPSDVISITD.

One can recognise a GIY-YIG domain in the interval 9-91 (GLFACYCLVA…TYPTRSRYVN (83 aa)). An SLX1-type zinc finger spans residues 192–238 (CPICQDGVSPSNVQCMQCSARFCITCAGKLFTRRNTLIPCFGKCPIC). The tract at residues 256-359 (VAGRKSVPHK…LPSDVISITD (104 aa)) is disordered. The span at 269 to 281 (VDGQSSLSQNSSY) shows a compositional bias: polar residues. The span at 295–306 (EPEKDDISRDES) shows a compositional bias: basic and acidic residues. The segment covering 316 to 326 (SSVALSDSSRS) has biased composition (low complexity).

It belongs to the SLX1 family. In terms of assembly, forms a heterodimer with a member of the SLX4 family. The cofactor is a divalent metal cation.

It is found in the nucleus. Functionally, catalytic subunit of a heterodimeric structure-specific endonuclease that resolves DNA secondary structures generated during DNA repair and recombination. Has endonuclease activity towards branched DNA substrates, introducing single-strand cuts in duplex DNA close to junctions with ss-DNA. The polypeptide is Structure-specific endonuclease subunit SLX1 homolog (Giardia intestinalis (strain ATCC 50803 / WB clone C6) (Giardia lamblia)).